The sequence spans 499 residues: Leukocyte immunoglobulin-like receptor subfamily A member 4 (499 aa).

Residues 1 to 23 form the signal peptide; that stretch reads MTLILTSLLFFGLSLGPRTRVQA. 4 Ig-like C2-type domains span residues 24 to 118, 123 to 213, 224 to 313, and 324 to 413; these read ENLL…LVVT, PTLS…SDPL, PSLL…DPLD, and PSLS…SEPL. Residues 24–446 are Extracellular-facing; the sequence is ENLLKPILWA…PHLQDYTVEN (423 aa). Cys-49 and Cys-98 are disulfide-bonded. Asn-138 carries N-linked (GlcNAc...) asparagine glycosylation. A disulfide bridge links Cys-143 with Cys-195. Asn-239, Asn-279, and Asn-300 each carry an N-linked (GlcNAc...) asparagine glycan. Cys-244 and Cys-295 form a disulfide bridge. A disulfide bridge connects residues Cys-344 and Cys-395. 3'-nitrotyrosine is present on Tyr-404. Residues 447-467 traverse the membrane as a helical segment; the sequence is LIRMGVAGLVLLFLGILLFEA. Topologically, residues 468–499 are cytoplasmic; it reads QHSQRSPPRCSQEANSRKDNAPFRVVEPWEQI.

As to quaternary structure, interacts with FCER1G; this stabilizes the expression of both proteins at the cell membrane. Interacts with BST2; leads to activation of LILRA4-mediated signaling and down-regulation of the innate immune response to viral pathogens. In terms of tissue distribution, detected on plasmacytoid dendritic cells (at protein level). Detected on plasmacytoid dendritic cells, but not on monocytes or B cells.

It is found in the cell membrane. Its function is as follows. Functions coreceptor to limit the innate immune responses to viral infections; signaling occurs via FCER1G. Down-regulates the production of IFNA1, IFNA2, IFNA4, IFNB1 and TNF by plasmacytoid dendritic cells that have been exposed to influenza virus or cytidine-phosphate-guanosine (CpG) dinucleotides, indicating it functions as a negative regulator of TLR7 and TLR9 signaling cascades. Down-regulates interferon production in response to interaction with BST2 on HIV-1 infected cells. Activates a signaling cascade in complex with FCER1G that results in phosphorylation of Src family and Syk kinases and thereby triggers mobilization of intracellular Ca(2+). Does not interfere with the differentiation of plasmacytoid dendritic cells into antigen-presenting cells. The polypeptide is Leukocyte immunoglobulin-like receptor subfamily A member 4 (Homo sapiens (Human)).